We begin with the raw amino-acid sequence, 749 residues long: Catalase-peroxidase 2 (749 aa).

An N-terminal signal peptide occupies residues 1 to 27 (MFKRTIPLFAAFTLAISPSVFPNYAYA). Positions 107–229 (WHAAGTYRIY…LAATVMGLIY (123 aa)) form a cross-link, tryptophyl-tyrosyl-methioninium (Trp-Tyr) (with M-255). Residue His108 is the Proton acceptor of the active site. Residues 229–255 (YVNPEGPNGVPDPLAAAEKIRETFGRM) constitute a cross-link (tryptophyl-tyrosyl-methioninium (Tyr-Met) (with W-107)). His270 serves as a coordination point for heme b.

The protein belongs to the peroxidase family. Peroxidase/catalase subfamily. As to quaternary structure, homodimer or homotetramer. Heme b serves as cofactor. Formation of the three residue Trp-Tyr-Met cross-link is important for the catalase, but not the peroxidase activity of the enzyme.

The enzyme catalyses H2O2 + AH2 = A + 2 H2O. It carries out the reaction 2 H2O2 = O2 + 2 H2O. In terms of biological role, bifunctional enzyme with both catalase and broad-spectrum peroxidase activity. In Legionella pneumophila (strain Paris), this protein is Catalase-peroxidase 2.